The sequence spans 362 residues: Phosphoserine aminotransferase (362 aa).

L-glutamate-binding residues include Ser9 and Arg42. Residues 76–77, Trp102, Thr153, Asp174, and Gln197 contribute to the pyridoxal 5'-phosphate site; that span reads GR. Residue Lys198 is modified to N6-(pyridoxal phosphate)lysine. 239–240 serves as a coordination point for pyridoxal 5'-phosphate; sequence NT.

The protein belongs to the class-V pyridoxal-phosphate-dependent aminotransferase family. SerC subfamily. Homodimer. It depends on pyridoxal 5'-phosphate as a cofactor.

It localises to the cytoplasm. The catalysed reaction is O-phospho-L-serine + 2-oxoglutarate = 3-phosphooxypyruvate + L-glutamate. It catalyses the reaction 4-(phosphooxy)-L-threonine + 2-oxoglutarate = (R)-3-hydroxy-2-oxo-4-phosphooxybutanoate + L-glutamate. It functions in the pathway amino-acid biosynthesis; L-serine biosynthesis; L-serine from 3-phospho-D-glycerate: step 2/3. The protein operates within cofactor biosynthesis; pyridoxine 5'-phosphate biosynthesis; pyridoxine 5'-phosphate from D-erythrose 4-phosphate: step 3/5. Catalyzes the reversible conversion of 3-phosphohydroxypyruvate to phosphoserine and of 3-hydroxy-2-oxo-4-phosphonooxybutanoate to phosphohydroxythreonine. The chain is Phosphoserine aminotransferase from Shigella boydii serotype 4 (strain Sb227).